The chain runs to 684 residues: Ski-like protein (684 aa).

Glycyl lysine isopeptide (Lys-Gly) (interchain with G-Cter in SUMO2) cross-links involve residues lysine 50 and lysine 70. The tract at residues 420-454 (SQSKELTKTEASKSISRQSEKAHSSGKLQKTVSYP) is disordered. Serine 452 bears the Phosphoserine mark. Residues lysine 489 and lysine 527 each participate in a glycyl lysine isopeptide (Lys-Gly) (interchain with G-Cter in SUMO2) cross-link. Residues 536–684 (RTYLKQQEKL…ILKSSKTAKE (149 aa)) are a coiled coil.

This sequence belongs to the SKI family. Interacts with CPNE4 (via VWFA domain). Interacts with SMAD2, SMAD3 and RNF111. Isoform 1 interacts with WWP1. Post-translationally, ubiquitinated by RNF111 and ARK2C, promoting proteasomal degradation, leading to enhance the BMP-Smad signaling. As to expression, isoform SNON and isoform SNOA are widely expressed. Highest expression is found in skeletal muscle, followed by placenta and lung. Lowest expression in heart, brain and pancreas. Isoform SNOI expression is restricted to skeletal muscle.

Its function is as follows. May have regulatory role in cell division or differentiation in response to extracellular signals. This is Ski-like protein (SKIL) from Homo sapiens (Human).